The primary structure comprises 705 residues: DNA polymerase alpha subunit B (705 aa).

The interval 115-199 (KKRKLHGPFS…TPTTSRQNVP (85 aa)) is disordered. Positions 125–134 (LSDSKQTYNV) are enriched in polar residues. At S126 the chain carries Phosphoserine. A compositionally biased stretch (low complexity) spans 181–197 (STFQTPTTNTPTTSRQN).

This sequence belongs to the DNA polymerase alpha subunit B family. In terms of assembly, DNA polymerase alpha:primase is a four subunit enzyme complex, which is assembled throughout the cell cycle, and consists of the two DNA polymerase subunits A POL1 and B POL12, and the DNA primase large PRI2 and small PRI1 subunits. Subunit B POL12 binds to subunit A POL1. In terms of processing, phosphorylated in a cell cycle-dependent manner.

The protein localises to the nucleus. Non-catalytic component of DNA polymerase alpha, which in a complex with DNA primase (DNA polymerase alpha:primase) constitutes a replicative polymerase. POL12 may play an essential role at the early stage of chromosomal DNA replication by coupling DNA polymerase alpha to the cellular replication machinery. Interacts with MCM10. This chain is DNA polymerase alpha subunit B (POL12), found in Saccharomyces cerevisiae (strain ATCC 204508 / S288c) (Baker's yeast).